The chain runs to 683 residues: Dynein, 78 kDa intermediate chain, flagellar outer arm (683 aa).

Residues 1–42 (MPALSPAKKGTDKGKTGKKTGKQEQNAQDYIPPPPPMPGDEA) are disordered. WD repeat units follow at residues 358 to 398 (HTES…DEPI), 407 to 450 (KLND…LIPE), 562 to 602 (DLND…LLPL), and 608 to 647 (VKKAKLTKLVFNPKHPIVLVGDDKGCVTSLKLSPNLRITS).

Belongs to the dynein intermediate chain family. Consists of at least 3 heavy chains (alpha, beta and gamma), 2 intermediate chains and 8 light chains.

It localises to the cytoplasm. It is found in the cytoskeleton. Its subcellular location is the flagellum axoneme. In terms of biological role, is essential for arm assembly or attachment to the outer doublet microtubule. The polypeptide is Dynein, 78 kDa intermediate chain, flagellar outer arm (ODA9) (Chlamydomonas reinhardtii (Chlamydomonas smithii)).